A 675-amino-acid polypeptide reads, in one-letter code: Acyl-coenzyme A oxidase 3, peroxisomal (675 aa).

The transit peptide at 1-34 (MSDNRALRRAHVLANHILQSNPPSSNPSLSRELC) directs the protein to the peroxisome. 442–457 (AVGGQGVKTENLVGQL) is an FAD binding site.

The protein belongs to the acyl-CoA oxidase family. Requires FAD as cofactor. In terms of tissue distribution, most abundant in flowers and senescing rosette leaves. Lower expression in hypocotyls, stems, young rosette leaves, cotyledons, cauline leaves and root tip of young seedlings.

It is found in the peroxisome. The enzyme catalyses a 2,3-saturated acyl-CoA + O2 = a (2E)-enoyl-CoA + H2O2. The protein operates within lipid metabolism; peroxisomal fatty acid beta-oxidation. In terms of biological role, catalyzes the desaturation of medium-chain acyl-CoAs to 2-trans-enoyl-CoAs. Active on C8:0- to C14:0-CoA with a maximal activity on C12:0-CoA. The chain is Acyl-coenzyme A oxidase 3, peroxisomal (ACX3) from Arabidopsis thaliana (Mouse-ear cress).